The chain runs to 314 residues: Probable manganese-dependent inorganic pyrophosphatase (314 aa).

Mn(2+) is bound by residues His-7, Asp-11, Asp-13, Asp-72, His-94, and Asp-146.

This sequence belongs to the PPase class C family. Mn(2+) is required as a cofactor.

Its subcellular location is the cytoplasm. The catalysed reaction is diphosphate + H2O = 2 phosphate + H(+). This is Probable manganese-dependent inorganic pyrophosphatase (ppaC) from Deinococcus radiodurans (strain ATCC 13939 / DSM 20539 / JCM 16871 / CCUG 27074 / LMG 4051 / NBRC 15346 / NCIMB 9279 / VKM B-1422 / R1).